We begin with the raw amino-acid sequence, 255 residues long: uncharacterized protein (255 aa).

NADP(+) contacts are provided by Ile13, Arg37, Asp55, Asn81, Tyr148, Lys152, Val180, and Thr182. Tyr148 functions as the Proton donor in the catalytic mechanism. Lys152 serves as the catalytic Lowers pKa of active site Tyr.

It belongs to the short-chain dehydrogenases/reductases (SDR) family.

Involved in osmoadaptation. This is an uncharacterized protein from Emericella nidulans (strain FGSC A4 / ATCC 38163 / CBS 112.46 / NRRL 194 / M139) (Aspergillus nidulans).